The sequence spans 162 residues: General odorant-binding protein 2 (162 aa).

The signal sequence occupies residues 1-18 (MTSKSCLLLVAMVTLTTS). 3 cysteine pairs are disulfide-bonded: Cys-40/Cys-75, Cys-71/Cys-129, and Cys-118/Cys-138.

This sequence belongs to the PBP/GOBP family. In terms of tissue distribution, antenna.

Functionally, present in the aqueous fluid surrounding olfactory sensory dendrites and are thought to aid in the capture and transport of hydrophobic odorants into and through this fluid. The protein is General odorant-binding protein 2 of Heliothis virescens (Tobacco budworm moth).